The sequence spans 82 residues: Penaeidin-3b (82 aa).

The signal sequence occupies residues Met1–Gly19. Gln20 carries the post-translational modification Pyrrolidone carboxylic acid. Intrachain disulfides connect Cys51–Cys66, Cys55–Cys73, and Cys67–Cys74. Ser81 is subject to Serine amide.

It belongs to the penaeidin family. As to expression, higher expression in hemocytes and to a lesser extent in heart, testis, gills, intestine, lymphoid organ and hepatopancreas. Traces in eyes and subcuticular epithelium. Not present in the brain.

The protein localises to the cytoplasmic granule. Its function is as follows. Antibacterial activity against M.luteus and E.coli bacteria. Antifungal activity against N.crassa and F.oxysporum. Presents chitin-binding activity. This Penaeus vannamei (Whiteleg shrimp) protein is Penaeidin-3b.